The following is a 565-amino-acid chain: Urocanate hydratase (565 aa).

NAD(+) contacts are provided by residues Gly61–Gly62, Gln139, Gly185–Gly187, Glu205, Arg210, Asn251–Ala252, Gln272–His276, Tyr282–Leu283, and Tyr331. Cys419 is a catalytic residue. Positions Leu453 to Ser472 are disordered. The segment covering Arg463–Ser472 has biased composition (basic and acidic residues). Gly501 lines the NAD(+) pocket.

This sequence belongs to the urocanase family. The cofactor is NAD(+).

The protein resides in the cytoplasm. The catalysed reaction is 4-imidazolone-5-propanoate = trans-urocanate + H2O. The protein operates within amino-acid degradation; L-histidine degradation into L-glutamate; N-formimidoyl-L-glutamate from L-histidine: step 2/3. Catalyzes the conversion of urocanate to 4-imidazolone-5-propionate. The chain is Urocanate hydratase from Pseudomonas savastanoi pv. phaseolicola (strain 1448A / Race 6) (Pseudomonas syringae pv. phaseolicola (strain 1448A / Race 6)).